A 188-amino-acid polypeptide reads, in one-letter code: Holliday junction branch migration complex subunit RuvA (188 aa).

Positions 1-64 are domain I; that stretch reads MIAGISGRVL…QDGITLYGFS (64 aa). The tract at residues 65–143 is domain II; it reads NERKKELFLS…SAGIKDMRIY (79 aa). Residue Y143 is a region of interest, flexible linker. The tract at residues 143-188 is domain III; sequence YHESLEALISLGYPEKQAREAVKHVYREGMKTSELIKEALKFLSQR.

This sequence belongs to the RuvA family. Homotetramer. Forms an RuvA(8)-RuvB(12)-Holliday junction (HJ) complex. HJ DNA is sandwiched between 2 RuvA tetramers; dsDNA enters through RuvA and exits via RuvB. An RuvB hexamer assembles on each DNA strand where it exits the tetramer. Each RuvB hexamer is contacted by two RuvA subunits (via domain III) on 2 adjacent RuvB subunits; this complex drives branch migration. In the full resolvosome a probable DNA-RuvA(4)-RuvB(12)-RuvC(2) complex forms which resolves the HJ.

The protein localises to the cytoplasm. Functionally, the RuvA-RuvB-RuvC complex processes Holliday junction (HJ) DNA during genetic recombination and DNA repair, while the RuvA-RuvB complex plays an important role in the rescue of blocked DNA replication forks via replication fork reversal (RFR). RuvA specifically binds to HJ cruciform DNA, conferring on it an open structure. The RuvB hexamer acts as an ATP-dependent pump, pulling dsDNA into and through the RuvAB complex. HJ branch migration allows RuvC to scan DNA until it finds its consensus sequence, where it cleaves and resolves the cruciform DNA. The sequence is that of Holliday junction branch migration complex subunit RuvA from Thermotoga petrophila (strain ATCC BAA-488 / DSM 13995 / JCM 10881 / RKU-1).